The chain runs to 287 residues: MDDFLSISLLSLAMLVGCYVAGIIPLAVNFSEERLKLVTVLGAGLLCGTALAVIVPEGVHALYEEVLEGKHHQASEAKQNVIASDKAAEISVVHEHEHSHDHTQLHAYIGVSLVLGFVFMLLVDQIGSSHVHSTDDPESARPSSSKITTTLGLVVHAAADGVALGAAASTSQTSVQLIVFVAIMLHKAPAAFGLVSFLMHAGLERNRIRKHLLVFALAAPAMSMLTYLGLSKSSKEALSEVNATGVAMLFSAGTFLYVATVHVLPEDTSTNQSGSSLSPRPLPSGKN.

The chain crosses the membrane as a helical span at residues Phe-4 to Ile-24. Residue Asn-29 is glycosylated (N-linked (GlcNAc...) asparagine). A run of 5 helical transmembrane segments spans residues Leu-35–Val-55, Ala-107–Gly-127, Ile-147–Ala-167, Leu-177–Phe-197, and His-211–Ser-231. The N-linked (GlcNAc...) asparagine glycan is linked to Asn-242. A helical membrane pass occupies residues Gly-245–Pro-265. The tract at residues Thr-268–Asn-287 is disordered. A glycan (N-linked (GlcNAc...) asparagine) is linked at Asn-271. Positions Ser-273–Asn-287 are enriched in low complexity.

It belongs to the ZIP transporter (TC 2.A.5) family.

The protein resides in the golgi apparatus. The protein localises to the trans-Golgi network membrane. Its subcellular location is the cell membrane. It is found in the cytoplasm. It localises to the perinuclear region. The protein resides in the mitochondrion. The protein localises to the nucleus. It carries out the reaction Zn(2+)(in) = Zn(2+)(out). In terms of biological role, transports zinc ions across cell and organelle membranes into the cytoplasm and regulates intracellular zinc homeostasis. Participates in the zinc ions efflux out of the secretory compartments. Regulates intracellular zinc level, resulting in the enhancement of AKT1 and MAPK3/MAPK1 (Erk1/2) phosphorylation in response to the BCR activation. Also functions as a membrane androgen receptor that mediates, through a G protein, the non-classical androgen signaling pathway, characterized by the activation of MAPK3/MAPK1 (Erk1/2) and transcription factors CREB1 or ATF1. This pathway contributes to CLDN1 and CLDN5 expression and tight junction formation between adjacent Sertoli cells. Mediates androgen-induced vascular endothelial cell proliferation through activation of an inhibitory G protein leading to the AKT1 and MAPK3/MAPK1 (Erk1/2) activation which in turn modulate inhibition (phosphorylation) of GSK3B and CCND1 transcription. Moreover, has dual functions as a membrane-bound androgen receptor and as an androgen-dependent zinc transporter both of which are mediated through an inhibitory G protein (Gi) that mediates both MAP kinase and zinc signaling leading to the androgen-dependent apoptotic process. In Rattus norvegicus (Rat), this protein is Zinc transporter ZIP9.